The primary structure comprises 525 residues: Ankyrin repeat and SOCS box protein 3 (525 aa).

11 ANK repeats span residues 9–38 (DTCS…SIDV), 42–71 (RGWM…SENY), 78–107 (EGFC…DPNA), 111–140 (EETT…NVNG), 145–174 (CGWN…NKEC), 178–207 (FGIT…DVNC), 211–240 (DKAT…DPDL), 246–275 (NWQL…RVCD), 279–308 (NKVS…SPDA), 315–346 (GFSS…QLNE), and 348–373 (HLAY…PSTP). Residues 441-505 (MLSARASNSS…HDYLLYAEVL (65 aa)) form the SOCS box domain.

It belongs to the ankyrin SOCS box (ASB) family. In terms of assembly, interacts with ELOB and TNFRSF1B.

It functions in the pathway protein modification; protein ubiquitination. Its function is as follows. Probable substrate-recognition component of a SCF-like ECS (Elongin-Cullin-SOCS-box protein) E3 ubiquitin-protein ligase complex which mediates the ubiquitination and subsequent proteasomal degradation of target proteins. Recognizes TNFRSF1B. This Bos taurus (Bovine) protein is Ankyrin repeat and SOCS box protein 3 (ASB3).